A 103-amino-acid polypeptide reads, in one-letter code: Small ribosomal subunit protein uS17 (103 aa).

A disordered region spans residues 78-103 (SHSPKADKSAGSTAPAPEAAAKEVSE).

It belongs to the universal ribosomal protein uS17 family. As to quaternary structure, part of the 30S ribosomal subunit.

Functionally, one of the primary rRNA binding proteins, it binds specifically to the 5'-end of 16S ribosomal RNA. This is Small ribosomal subunit protein uS17 from Parasynechococcus marenigrum (strain WH8102).